Here is a 524-residue protein sequence, read N- to C-terminus: Na(+)/H(+) antiporter NhaB (524 aa).

Transmembrane regions (helical) follow at residues 13-33 (FLGN…IINP), 98-118 (LLLV…LFVF), 140-160 (AFLS…SVSV), 239-259 (FFIR…LVCL), 304-324 (AIIG…VGLV), 325-345 (GLSV…HSLG), 358-378 (LTVF…TPII), 448-468 (ATPN…APLI), and 479-499 (ALPY…FLLV).

It belongs to the NhaB Na(+)/H(+) (TC 2.A.34) antiporter family.

Its subcellular location is the cell inner membrane. It carries out the reaction 2 Na(+)(in) + 3 H(+)(out) = 2 Na(+)(out) + 3 H(+)(in). Functionally, na(+)/H(+) antiporter that extrudes sodium in exchange for external protons. This chain is Na(+)/H(+) antiporter NhaB, found in Yersinia pseudotuberculosis serotype I (strain IP32953).